The chain runs to 107 residues: Quaternary ammonium compound-resistance protein QacG (107 aa).

Transmembrane regions (helical) follow at residues 1-21, 26-46, 57-77, and 84-104; these read MHYL…SFLK, FTKL…FYFL, ITYA…SVIV, and LISI…NVFG.

The protein belongs to the drug/metabolite transporter (DMT) superfamily. Small multidrug resistance (SMR) (TC 2.A.7.1) family.

It is found in the cell membrane. In terms of biological role, multidrug exporter. Is implicated for the resistance to bacteriocidal quaternary ammonium compounds. The polypeptide is Quaternary ammonium compound-resistance protein QacG (qacG) (Staphylococcus sp. (strain ST94)).